The primary structure comprises 177 residues: Large ribosomal subunit protein uL6 (177 aa).

The protein belongs to the universal ribosomal protein uL6 family. In terms of assembly, part of the 50S ribosomal subunit.

Functionally, this protein binds to the 23S rRNA, and is important in its secondary structure. It is located near the subunit interface in the base of the L7/L12 stalk, and near the tRNA binding site of the peptidyltransferase center. The chain is Large ribosomal subunit protein uL6 from Rhizobium johnstonii (strain DSM 114642 / LMG 32736 / 3841) (Rhizobium leguminosarum bv. viciae).